An 892-amino-acid polypeptide reads, in one-letter code: Translation initiation factor IF-2 (892 aa).

Disordered stretches follow at residues 144–176 (QQRL…QKTE) and 189–298 (SNSV…SGAH). Over residues 207 to 219 (LPRTVRPTPAARP) the composition is skewed to low complexity. The tr-type G domain maps to 391–560 (PRPPVVTIMG…SIQAEVLELK (170 aa)). Residues 400-407 (GHVDHGKT), 446-450 (DTPGH), and 500-503 (SKID) each bind GTP.

It belongs to the TRAFAC class translation factor GTPase superfamily. Classic translation factor GTPase family. IF-2 subfamily.

It is found in the cytoplasm. Functionally, one of the essential components for the initiation of protein synthesis. Protects formylmethionyl-tRNA from spontaneous hydrolysis and promotes its binding to the 30S ribosomal subunits. Also involved in the hydrolysis of GTP during the formation of the 70S ribosomal complex. The sequence is that of Translation initiation factor IF-2 from Xylella fastidiosa (strain M12).